We begin with the raw amino-acid sequence, 869 residues long: Aconitate hydratase A (869 aa).

[4Fe-4S] cluster contacts are provided by Cys-411, Cys-477, and Cys-480.

This sequence belongs to the aconitase/IPM isomerase family. As to quaternary structure, monomer. [4Fe-4S] cluster is required as a cofactor.

The catalysed reaction is citrate = D-threo-isocitrate. It carries out the reaction (2S,3R)-3-hydroxybutane-1,2,3-tricarboxylate = 2-methyl-cis-aconitate + H2O. It participates in carbohydrate metabolism; tricarboxylic acid cycle; isocitrate from oxaloacetate: step 2/2. The protein operates within organic acid metabolism; propanoate degradation. Its function is as follows. Involved in the catabolism of short chain fatty acids (SCFA) via the tricarboxylic acid (TCA)(acetyl degradation route) and the 2-methylcitrate cycle I (propionate degradation route). Catalyzes the reversible isomerization of citrate to isocitrate via cis-aconitate. Could catalyze the hydration of 2-methyl-cis-aconitate to yield (2S,3R)-2-methylisocitrate. The apo form of AcnA functions as a RNA-binding regulatory protein. The chain is Aconitate hydratase A from Cupriavidus necator (Alcaligenes eutrophus).